We begin with the raw amino-acid sequence, 625 residues long: DNA mismatch repair protein MutL (625 aa).

Belongs to the DNA mismatch repair MutL/HexB family.

Its function is as follows. This protein is involved in the repair of mismatches in DNA. It is required for dam-dependent methyl-directed DNA mismatch repair. May act as a 'molecular matchmaker', a protein that promotes the formation of a stable complex between two or more DNA-binding proteins in an ATP-dependent manner without itself being part of a final effector complex. The chain is DNA mismatch repair protein MutL from Bacteroides fragilis (strain YCH46).